Consider the following 101-residue polypeptide: ATP synthase subunit c (101 aa).

2 helical membrane-spanning segments follow: residues 35–55 (IGAG…GLIG) and 81–101 (GISE…IFVV).

The protein belongs to the ATPase C chain family. F-type ATPases have 2 components, F(1) - the catalytic core - and F(0) - the membrane proton channel. F(1) has five subunits: alpha(3), beta(3), gamma(1), delta(1), epsilon(1). F(0) has three main subunits: a(1), b(2) and c(10-14). The alpha and beta chains form an alternating ring which encloses part of the gamma chain. F(1) is attached to F(0) by a central stalk formed by the gamma and epsilon chains, while a peripheral stalk is formed by the delta and b chains.

Its subcellular location is the cell membrane. Its function is as follows. F(1)F(0) ATP synthase produces ATP from ADP in the presence of a proton or sodium gradient. F-type ATPases consist of two structural domains, F(1) containing the extramembraneous catalytic core and F(0) containing the membrane proton channel, linked together by a central stalk and a peripheral stalk. During catalysis, ATP synthesis in the catalytic domain of F(1) is coupled via a rotary mechanism of the central stalk subunits to proton translocation. Functionally, key component of the F(0) channel; it plays a direct role in translocation across the membrane. A homomeric c-ring of between 10-14 subunits forms the central stalk rotor element with the F(1) delta and epsilon subunits. This chain is ATP synthase subunit c, found in Mycoplasma capricolum subsp. capricolum (strain California kid / ATCC 27343 / NCTC 10154).